Here is a 263-residue protein sequence, read N- to C-terminus: Probable ribosomal RNA small subunit methyltransferase A (263 aa).

Leucine 12, glycine 37, glutamate 58, aspartate 83, and asparagine 100 together coordinate S-adenosyl-L-methionine.

Belongs to the class I-like SAM-binding methyltransferase superfamily. rRNA adenine N(6)-methyltransferase family. RsmA subfamily.

The protein resides in the cytoplasm. Its function is as follows. Specifically dimethylates two adjacent adenosines in the loop of a conserved hairpin near the 3'-end of 16S rRNA in the 30S particle. May play a critical role in biogenesis of 30S subunits. The chain is Probable ribosomal RNA small subunit methyltransferase A from Methanococcus maripaludis (strain C7 / ATCC BAA-1331).